Reading from the N-terminus, the 275-residue chain is Phosphate import ATP-binding protein PstB 1 (275 aa).

The 240-residue stretch at 22-261 (FNVEGVKVYY…SPTEQMFNSP (240 aa)) folds into the ABC transporter domain. 54–61 (GPSGCGKS) contacts ATP.

It belongs to the ABC transporter superfamily. Phosphate importer (TC 3.A.1.7) family. As to quaternary structure, the complex is composed of two ATP-binding proteins (PstB), two transmembrane proteins (PstC and PstA) and a solute-binding protein (PstS).

It localises to the cell inner membrane. It catalyses the reaction phosphate(out) + ATP + H2O = ADP + 2 phosphate(in) + H(+). Part of the ABC transporter complex PstSACB involved in phosphate import. Responsible for energy coupling to the transport system. In Trichormus variabilis (strain ATCC 29413 / PCC 7937) (Anabaena variabilis), this protein is Phosphate import ATP-binding protein PstB 1.